The following is a 423-amino-acid chain: Adenylosuccinate synthetase (423 aa).

D12 acts as the Proton acceptor in catalysis. 2 residues coordinate Mg(2+): D12 and G39. Residues 37–40 (NAGH), T129, R143, N221, T236, and R300 each bind IMP. Residue 39–41 (GHS) coordinates GTP. The active-site Proton donor is the H40. 296 to 302 (VSTGRKR) is a substrate binding site. Residues R302, 328-330 (KLD), and 412-414 (GTG) contribute to the GTP site.

This sequence belongs to the adenylosuccinate synthetase family. In terms of assembly, homodimer. It depends on Mg(2+) as a cofactor.

It is found in the cytoplasm. It carries out the reaction IMP + L-aspartate + GTP = N(6)-(1,2-dicarboxyethyl)-AMP + GDP + phosphate + 2 H(+). It functions in the pathway purine metabolism; AMP biosynthesis via de novo pathway; AMP from IMP: step 1/2. Its function is as follows. Plays an important role in the de novo pathway and in the salvage pathway of purine nucleotide biosynthesis. Catalyzes the first committed step in the biosynthesis of AMP from IMP. The sequence is that of Adenylosuccinate synthetase from Pyricularia oryzae (strain 70-15 / ATCC MYA-4617 / FGSC 8958) (Rice blast fungus).